The primary structure comprises 350 residues: MMQTCCIHQSFCFPHRVFPRFDASIGIKPPKLCQVGFIGKTQSYGISSPIRQRRLYVNLNANDGHPSMSMLEEETSTENNAPSQEAELPFSKWSPSKYIWRGLSVPIIAGQVVLRILKGKIHWRNTLQQLERTGPKSLGVCLLTSTFVGMAFTIQFVREFTRLGLNRSIGGVLALAFSRELSPVITSIVVAGRMGSAFAAELGTMQVSEQTDTLRVLGADPIDYLITPRVIASCLALPFLTLMCFTVGMASSALLSDAVYGISINIIMDSAHRALRPWDIVSAMIKSQVFGAIISVISCSWGVTTTGGAKGVGESTTSAVVMSLVGIFIADFVLSSFFFQGAGDSLKNCV.

The disordered stretch occupies residues 67–86 (SMSMLEEETSTENNAPSQEA). Residues 98 to 117 (YIWRGLSVPIIAGQVVLRIL) form a helical membrane-spanning segment. Residues 118–136 (KGKIHWRNTLQQLERTGPK) are Stromal-facing. A helical membrane pass occupies residues 137–157 (SLGVCLLTSTFVGMAFTIQFV). Over 158–168 (REFTRLGLNRS) the chain is Chloroplast intermembrane. The chain crosses the membrane as a helical span at residues 169-189 (IGGVLALAFSRELSPVITSIV). The Stromal segment spans residues 190–229 (VAGRMGSAFAAELGTMQVSEQTDTLRVLGADPIDYLITPR). A helical transmembrane segment spans residues 230 to 250 (VIASCLALPFLTLMCFTVGMA). At 251 to 288 (SSALLSDAVYGISINIIMDSAHRALRPWDIVSAMIKSQ) the chain is on the chloroplast intermembrane side. The chain crosses the membrane as a helical span at residues 289–309 (VFGAIISVISCSWGVTTTGGA). The Stromal portion of the chain corresponds to 310-318 (KGVGESTTS). Residues 319–339 (AVVMSLVGIFIADFVLSSFFF) form a helical membrane-spanning segment. The Chloroplast intermembrane portion of the chain corresponds to 340 to 350 (QGAGDSLKNCV).

The protein belongs to the MlaE permease family. Permease subunit of the TGD complex, a lipid translocator at the inner chloroplast envelope membrane made of TGD1, TGD2 and TGD3. Interacts with TGD2 and TGD3 with an overall subunit stoichiometry of 2 TGD1, 2 TGD3 and 8 to 12 TGD2. Interacts with TGD5. In terms of tissue distribution, high levels in green tissues, but low levels in nongreen tissues such as roots.

It localises to the plastid. The protein resides in the chloroplast inner membrane. Its function is as follows. Required during embryogenesis. Permease involved in lipid transfer from the endoplasmic reticulum (ER) to plastids, and necessary for thylakoids formation. In Arabidopsis thaliana (Mouse-ear cress), this protein is Protein TRIGALACTOSYLDIACYLGLYCEROL 1, chloroplastic.